A 333-amino-acid chain; its full sequence is Low specificity L-threonine aldolase (333 aa).

At K197 the chain carries N6-(pyridoxal phosphate)lysine.

It belongs to the threonine aldolase family. As to quaternary structure, homotetramer. Pyridoxal 5'-phosphate is required as a cofactor.

It catalyses the reaction L-threonine = acetaldehyde + glycine. It carries out the reaction L-allo-threonine = acetaldehyde + glycine. In terms of biological role, catalyzes the cleavage of L-allo-threonine and L-threonine to glycine and acetaldehyde. L-threo-phenylserine and L-erythro-phenylserine are also good substrates. This is Low specificity L-threonine aldolase (ltaE) from Escherichia coli O157:H7.